A 321-amino-acid chain; its full sequence is Endochitinase 1 (321 aa).

The first 21 residues, 1-21 (MSFRALSVFSLFLSYLILGSA), serve as a signal peptide directing secretion. The region spanning 22-64 (EQCGRQAGGALCPGGLCCSQFGWCGNTDDYCKKENGCQSQCSG) is the Chitin-binding type-1 domain. Cystine bridges form between Cys24-Cys39, Cys33-Cys45, Cys38-Cys52, Cys58-Cys62, Cys93-Cys156, Cys167-Cys175, and Cys274-Cys306. Residues 65–98 (SGGDTGGLDSLITRERFDQMLLHRNDGGCPARGF) form a hinge region. The segment at 99–321 (YTYDAFIAAA…YNNGPSVDSM (223 aa)) is catalytic. The Proton donor role is filled by Glu137.

Belongs to the glycosyl hydrolase 19 family. Chitinase class I subfamily.

Its subcellular location is the vacuole. It catalyses the reaction Random endo-hydrolysis of N-acetyl-beta-D-glucosaminide (1-&gt;4)-beta-linkages in chitin and chitodextrins.. Its function is as follows. Defense against chitin-containing fungal pathogens. The sequence is that of Endochitinase 1 (CHIA1) from Theobroma cacao (Cacao).